The primary structure comprises 315 residues: MAGPQALAFGLLLAVVTATLAAAQRDCVCDNYKLATSCSLNEYGECQCTSYGTQNTVICSKLASKCLAMKAEMTHSKSGRRIKPEGAIQNNDGLYDPDCDEQGLFKAKQCNGTATCWCVNTAGVRRTDKDTEITCSERVRTYWIIIELKHKERESPYDHQSLQTALQEAFTSRYKLNQKFIKNIMYENNVITIDLMQNSSQKTQDDVDIADVAYYFEKDVKGESLFHSSKSMDLRVNGEPLDLDPGQTLIYYVDEKAPEFSMQGLTAGIIAVIVVVSLAVIAGIVVLVISTRKKSAKYEKAEIKEMGEIHRELNA.

Positions 1 to 23 (MAGPQALAFGLLLAVVTATLAAA) are cleaved as a signal peptide. Residues 24-266 (QRDCVCDNYK…APEFSMQGLT (243 aa)) lie on the Extracellular side of the membrane. 6 disulfide bridges follow: C27/C46, C29/C59, C38/C48, C66/C99, C110/C116, and C118/C135. The Thyroglobulin type-1 domain occupies 63–135 (ASKCLAMKAE…RTDKDTEITC (73 aa)). N111 carries an N-linked (GlcNAc...) asparagine glycan. N-linked (GlcNAc...) asparagine glycosylation occurs at N198. Residues 267–289 (AGIIAVIVVVSLAVIAGIVVLVI) traverse the membrane as a helical segment. Topologically, residues 290–315 (STRKKSAKYEKAEIKEMGEIHRELNA) are cytoplasmic.

The protein belongs to the EPCAM family. Monomer. Interacts with phosphorylated CLDN7. Post-translationally, glycosylation at Asn-198 is crucial for protein stability.

Its subcellular location is the lateral cell membrane. It is found in the cell junction. The protein resides in the tight junction. Functionally, may act as a physical homophilic interaction molecule between intestinal epithelial cells (IECs) and intraepithelial lymphocytes (IELs) at the mucosal epithelium for providing immunological barrier as a first line of defense against mucosal infection. Plays a role in embryonic stem cells proliferation and differentiation. Up-regulates the expression of FABP5, MYC and cyclins A and E. This is Epithelial cell adhesion molecule (Epcam) from Mus musculus (Mouse).